Consider the following 266-residue polypeptide: Glucosamine-6-phosphate deaminase (266 aa).

Catalysis depends on Asp-72, which acts as the Proton acceptor; for enolization step. The active-site For ring-opening step is Asp-141. His-143 (proton acceptor; for ring-opening step) is an active-site residue. Glu-148 serves as the catalytic For ring-opening step.

This sequence belongs to the glucosamine/galactosamine-6-phosphate isomerase family. NagB subfamily. In terms of assembly, homohexamer.

The enzyme catalyses alpha-D-glucosamine 6-phosphate + H2O = beta-D-fructose 6-phosphate + NH4(+). The protein operates within amino-sugar metabolism; N-acetylneuraminate degradation; D-fructose 6-phosphate from N-acetylneuraminate: step 5/5. Its activity is regulated as follows. Allosterically activated by N-acetylglucosamine 6-phosphate (GlcNAc6P). In terms of biological role, catalyzes the reversible isomerization-deamination of glucosamine 6-phosphate (GlcN6P) to form fructose 6-phosphate (Fru6P) and ammonium ion. The sequence is that of Glucosamine-6-phosphate deaminase from Vibrio campbellii (strain ATCC BAA-1116).